Here is a 185-residue protein sequence, read N- to C-terminus: MIEVGDLKKGMFIIYDGEIYRVLEASKHFMGRGSGLIRTKLKNVKTGLVREVNFPSGDKVPEAELSFRKAQYLYRDGDHYYFMTLDDYEQYALSEEEIGDAKYYLVENMEVDLVFHEGTPIGIELPTTVELTVVETEPSFKGDTVSGGGKPAVLETGLKITVPYFIEVGDKIKVDTRTGEYVGRA.

The protein belongs to the elongation factor P family.

It localises to the cytoplasm. Its pathway is protein biosynthesis; polypeptide chain elongation. Involved in peptide bond synthesis. Stimulates efficient translation and peptide-bond synthesis on native or reconstituted 70S ribosomes in vitro. Probably functions indirectly by altering the affinity of the ribosome for aminoacyl-tRNA, thus increasing their reactivity as acceptors for peptidyl transferase. The polypeptide is Elongation factor P (Thermotoga petrophila (strain ATCC BAA-488 / DSM 13995 / JCM 10881 / RKU-1)).